Reading from the N-terminus, the 103-residue chain is uncharacterized protein (103 aa).

This is an uncharacterized protein from Escherichia coli (strain UTI89 / UPEC).